We begin with the raw amino-acid sequence, 449 residues long: Glycoprotein endo-alpha-1,2-mannosidase (449 aa).

The Cytoplasmic portion of the chain corresponds to Met-1 to Thr-8. Residues Cys-9 to Leu-29 form a helical; Signal-anchor for type II membrane protein membrane-spanning segment. The Lumenal portion of the chain corresponds to Arg-30–Val-449. The segment at Asp-59–Val-449 is catalytic.

It belongs to the glycosyl hydrolase 99 family.

The protein resides in the golgi apparatus membrane. The enzyme catalyses N-{alpha-Glc-(1-&gt;3)-alpha-Man-(1-&gt;2)-alpha-Man-(1-&gt;2)-alpha-Man-(1-&gt;3)-[alpha-Man-(1-&gt;2)-alpha-Man-(1-&gt;3)-[alpha-Man-(1-&gt;2)-alpha-Man-(1-&gt;6)]-alpha-Man-(1-&gt;6)]-beta-Man-(1-&gt;4)-beta-GlcNAc-(1-&gt;4)-beta-GlcNAc}-L-asparaginyl-[protein] + H2O = alpha-D-glucosyl-(1-&gt;3)-D-mannopyranose + N(4)-{alpha-D-Man-(1-&gt;2)-alpha-D-Man-(1-&gt;3)-[alpha-D-Man-(1-&gt;2)-alpha-D-Man-(1-&gt;3)-[alpha-D-Man-(1-&gt;2)-alpha-D-Man-(1-&gt;6)]-alpha-D-Man-(1-&gt;6)]-beta-D-Man-(1-&gt;4)-beta-D-GlaNAc-(1-&gt;4)-beta-D-GlcNAc}-L-asparaginyl-[protein] (N-glucan mannose isomer 8A1,2,3B1,2). This Xenopus laevis (African clawed frog) protein is Glycoprotein endo-alpha-1,2-mannosidase (manea).